Consider the following 269-residue polypeptide: 4-hydroxy-tetrahydrodipicolinate reductase (269 aa).

NAD(+) is bound by residues 8 to 13 (GAAGRM) and glutamate 34. Residue arginine 35 participates in NADP(+) binding. NAD(+) contacts are provided by residues 98-100 (GTT) and 122-125 (APNY). Histidine 155 serves as the catalytic Proton donor/acceptor. Histidine 156 is a (S)-2,3,4,5-tetrahydrodipicolinate binding site. Lysine 159 serves as the catalytic Proton donor. 165–166 (GT) contributes to the (S)-2,3,4,5-tetrahydrodipicolinate binding site.

This sequence belongs to the DapB family.

The protein localises to the cytoplasm. The enzyme catalyses (S)-2,3,4,5-tetrahydrodipicolinate + NAD(+) + H2O = (2S,4S)-4-hydroxy-2,3,4,5-tetrahydrodipicolinate + NADH + H(+). It carries out the reaction (S)-2,3,4,5-tetrahydrodipicolinate + NADP(+) + H2O = (2S,4S)-4-hydroxy-2,3,4,5-tetrahydrodipicolinate + NADPH + H(+). It participates in amino-acid biosynthesis; L-lysine biosynthesis via DAP pathway; (S)-tetrahydrodipicolinate from L-aspartate: step 4/4. Its function is as follows. Catalyzes the conversion of 4-hydroxy-tetrahydrodipicolinate (HTPA) to tetrahydrodipicolinate. The sequence is that of 4-hydroxy-tetrahydrodipicolinate reductase from Aliivibrio fischeri (strain ATCC 700601 / ES114) (Vibrio fischeri).